An 89-amino-acid polypeptide reads, in one-letter code: DNA/RNA-binding protein Alba 1 (89 aa).

This sequence belongs to the histone-like Alba family.

The protein resides in the cytoplasm. It is found in the chromosome. Functionally, binds double-stranded DNA tightly but without sequence specificity. Involved in DNA compaction. The sequence is that of DNA/RNA-binding protein Alba 1 from Archaeoglobus fulgidus (strain ATCC 49558 / DSM 4304 / JCM 9628 / NBRC 100126 / VC-16).